Reading from the N-terminus, the 222-residue chain is Charged multivesicular body protein 4b (222 aa).

Disordered regions lie at residues 1-21 (MSLIGKLFGTGGKGAKGPSPQ) and 177-222 (NLLE…WATA). Residues 21–182 (QEAIQKLRDT…ELDKNLLEVQ (162 aa)) adopt a coiled-coil conformation.

This sequence belongs to the SNF7 family. Probable core component of the endosomal sorting required for transport complex III (ESCRT-III). ESCRT-III components are thought to multimerize to form a flat lattice on the perimeter membrane of the endosome.

The protein localises to the cytoplasm. The protein resides in the cytosol. It is found in the late endosome membrane. Its subcellular location is the midbody. In terms of biological role, probable core component of the endosomal sorting required for transport complex III (ESCRT-III) which is involved in multivesicular bodies (MVBs) formation and sorting of endosomal cargo proteins into MVBs. MVBs contain intraluminal vesicles (ILVs) that are generated by invagination and scission from the limiting membrane of the endosome and mostly are delivered to lysosomes enabling degradation of membrane proteins, such as stimulated growth factor receptors, lysosomal enzymes and lipids. This Xenopus laevis (African clawed frog) protein is Charged multivesicular body protein 4b (chmp4b).